A 513-amino-acid polypeptide reads, in one-letter code: MQLNSTEISELIKQRIAQFNVVSEAHNEGTIVSVSDGIIRVHGLADVMQGEMISLPGNRYAIALNLERDSVGAVVMGPYADLAEGMKVKCTGRILEVPVGRGLLGRVVNTLGAPIDGKGALDHDGFSAVEAIAPGVIERQSVDEPVQTGYKSVDAMIPIGRGQRELIIGDRQTGKTALAIDAIINQRDSGIKCVYVAIGQKASTISNVVRKLEEHGALENTIVVVATASESAALQYLAPYAGCAMGEYFRDRGEDALIIYDDLSKQAVAYRQISLLLRRPPGREAYPGDVFYLHSRLLERASRVNADYVEAFTKGEVKGKTGSLTALPIIETQAGDVSAFVPTNVISITDGQIFLESNLFNAGIRPAVNPGISVSRVGGAAQTKIMKKLSGGIRTALAQYRELAAFSQFASDLDDATRKQLSHGQKVTELLKQKQYAPMSVAQQSLVLFAAERGYLEDVELSKVGSFEAALLAYADREHGELLQQIDQTGAYNDEIEGKFKGILDTFKATQSW.

ATP is bound at residue 169–176; the sequence is GDRQTGKT.

The protein belongs to the ATPase alpha/beta chains family. F-type ATPases have 2 components, CF(1) - the catalytic core - and CF(0) - the membrane proton channel. CF(1) has five subunits: alpha(3), beta(3), gamma(1), delta(1), epsilon(1). CF(0) has three main subunits: a(1), b(2) and c(9-12). The alpha and beta chains form an alternating ring which encloses part of the gamma chain. CF(1) is attached to CF(0) by a central stalk formed by the gamma and epsilon chains, while a peripheral stalk is formed by the delta and b chains.

The protein resides in the cell inner membrane. The catalysed reaction is ATP + H2O + 4 H(+)(in) = ADP + phosphate + 5 H(+)(out). Functionally, produces ATP from ADP in the presence of a proton gradient across the membrane. The alpha chain is a regulatory subunit. This is ATP synthase subunit alpha from Pectobacterium carotovorum subsp. carotovorum (strain PC1).